A 232-amino-acid polypeptide reads, in one-letter code: 7-cyano-7-deazaguanine synthase 1 (232 aa).

7-17 (CSGGLDSVSLA) is a binding site for ATP. Zn(2+) is bound by residues C185, C193, C196, and C199.

This sequence belongs to the QueC family. The cofactor is Zn(2+).

The catalysed reaction is 7-carboxy-7-deazaguanine + NH4(+) + ATP = 7-cyano-7-deazaguanine + ADP + phosphate + H2O + H(+). The protein operates within purine metabolism; 7-cyano-7-deazaguanine biosynthesis. Catalyzes the ATP-dependent conversion of 7-carboxy-7-deazaguanine (CDG) to 7-cyano-7-deazaguanine (preQ(0)). The chain is 7-cyano-7-deazaguanine synthase 1 from Mesorhizobium japonicum (strain LMG 29417 / CECT 9101 / MAFF 303099) (Mesorhizobium loti (strain MAFF 303099)).